Reading from the N-terminus, the 265-residue chain is Hydroxyacylglutathione hydrolase (265 aa).

Zn(2+) contacts are provided by histidine 53, histidine 55, aspartate 57, histidine 58, histidine 109, aspartate 126, and histidine 164.

This sequence belongs to the metallo-beta-lactamase superfamily. Glyoxalase II family. In terms of assembly, monomer. Requires Zn(2+) as cofactor.

The enzyme catalyses an S-(2-hydroxyacyl)glutathione + H2O = a 2-hydroxy carboxylate + glutathione + H(+). The protein operates within secondary metabolite metabolism; methylglyoxal degradation; (R)-lactate from methylglyoxal: step 2/2. In terms of biological role, thiolesterase that catalyzes the hydrolysis of S-D-lactoyl-glutathione to form glutathione and D-lactic acid. This chain is Hydroxyacylglutathione hydrolase, found in Dechloromonas aromatica (strain RCB).